Consider the following 288-residue polypeptide: Ubiquitin thioesterase otubain-like (288 aa).

Residues 76-275 (SHIRFIRGDG…PGHYDLIYKA (200 aa)) enclose the OTU domain. Asp-84 is an active-site residue. The active-site Nucleophile is Cys-87. Ile-175 is a substrate binding site. Active-site residues include His-244 and His-268.

The protein belongs to the peptidase C65 family.

The enzyme catalyses Thiol-dependent hydrolysis of ester, thioester, amide, peptide and isopeptide bonds formed by the C-terminal Gly of ubiquitin (a 76-residue protein attached to proteins as an intracellular targeting signal).. In terms of biological role, hydrolase that can remove conjugated ubiquitin from proteins and plays an important regulatory role at the level of protein turnover by preventing degradation. Specifically cleaves 'Lys-48'-linked polyubiquitin. The polypeptide is Ubiquitin thioesterase otubain-like (Caenorhabditis briggsae).